The chain runs to 404 residues: Formate-dependent phosphoribosylglycinamide formyltransferase (404 aa).

N(1)-(5-phospho-beta-D-ribosyl)glycinamide-binding positions include 25 to 26 and glutamate 85; that span reads EL. Residues arginine 118, lysine 159, 164–169, 199–202, and glutamate 207 contribute to the ATP site; these read SSGKGQ and EGFV. The region spanning 123–318 is the ATP-grasp domain; it reads RLAAEELGLP…EFELHARAIL (196 aa). Mg(2+) is bound by residues glutamate 277 and glutamate 289. Residues aspartate 296, lysine 365, and 372 to 373 each bind N(1)-(5-phospho-beta-D-ribosyl)glycinamide; that span reads RR.

This sequence belongs to the PurK/PurT family. In terms of assembly, homodimer.

It carries out the reaction N(1)-(5-phospho-beta-D-ribosyl)glycinamide + formate + ATP = N(2)-formyl-N(1)-(5-phospho-beta-D-ribosyl)glycinamide + ADP + phosphate + H(+). It participates in purine metabolism; IMP biosynthesis via de novo pathway; N(2)-formyl-N(1)-(5-phospho-D-ribosyl)glycinamide from N(1)-(5-phospho-D-ribosyl)glycinamide (formate route): step 1/1. Involved in the de novo purine biosynthesis. Catalyzes the transfer of formate to 5-phospho-ribosyl-glycinamide (GAR), producing 5-phospho-ribosyl-N-formylglycinamide (FGAR). Formate is provided by PurU via hydrolysis of 10-formyl-tetrahydrofolate. In Burkholderia thailandensis (strain ATCC 700388 / DSM 13276 / CCUG 48851 / CIP 106301 / E264), this protein is Formate-dependent phosphoribosylglycinamide formyltransferase.